Consider the following 257-residue polypeptide: Pyridoxine 5'-phosphate synthase (257 aa).

Asn-6 is a 3-amino-2-oxopropyl phosphate binding site. 8–9 (DH) contacts 1-deoxy-D-xylulose 5-phosphate. Residue Arg-17 participates in 3-amino-2-oxopropyl phosphate binding. Catalysis depends on His-41, which acts as the Proton acceptor. The 1-deoxy-D-xylulose 5-phosphate site is built by Arg-43 and His-48. The active-site Proton acceptor is Glu-68. Thr-98 serves as a coordination point for 1-deoxy-D-xylulose 5-phosphate. His-210 functions as the Proton donor in the catalytic mechanism. Residues Gly-211 and 232–233 (GQ) each bind 3-amino-2-oxopropyl phosphate.

Belongs to the PNP synthase family. Homooctamer; tetramer of dimers.

The protein resides in the cytoplasm. The enzyme catalyses 3-amino-2-oxopropyl phosphate + 1-deoxy-D-xylulose 5-phosphate = pyridoxine 5'-phosphate + phosphate + 2 H2O + H(+). The protein operates within cofactor biosynthesis; pyridoxine 5'-phosphate biosynthesis; pyridoxine 5'-phosphate from D-erythrose 4-phosphate: step 5/5. Catalyzes the complicated ring closure reaction between the two acyclic compounds 1-deoxy-D-xylulose-5-phosphate (DXP) and 3-amino-2-oxopropyl phosphate (1-amino-acetone-3-phosphate or AAP) to form pyridoxine 5'-phosphate (PNP) and inorganic phosphate. The chain is Pyridoxine 5'-phosphate synthase from Campylobacter jejuni (strain RM1221).